The chain runs to 153 residues: ORM1-like protein 3 (153 aa).

An important for ceramide level-sensing region spans residues Met-1–Met-17. Residues Met-1–Gly-21 are Cytoplasmic-facing. The next 2 helical transmembrane spans lie at Ile-22–Ser-44 and Val-45–Phe-63. The Cytoplasmic portion of the chain corresponds to Leu-64–Lys-100. The chain crosses the membrane as a helical span at residues Phe-101–Thr-117. Residues Lys-118–Gln-121 lie on the Lumenal side of the membrane. A helical transmembrane segment spans residues Ile-122–Leu-139. Residue Pro-137 is modified to Hydroxyproline. Over Pro-140–Tyr-153 the chain is Cytoplasmic.

The protein belongs to the ORM family. In terms of assembly, ceramide-sensitive subunit of the serine palmitoyltransferase (SPT) complex, which is also composed of SPTLC1, SPTLC2/3 and SPTSSA/B. When hydroxylated at Pro-137, ubiquitinated via 'Lys-48'-linkage, leading to proteasomal degradation. In endothelial cells, ORMDL3 proteasomal degradation is controlled by the sphingosine 1-phosphate receptor signaling pathway. Widely expressed. Expressed in adult and fetal heart, brain, lung, liver, skeletal muscle and kidney. Expressed in adult pancreas and placenta and in fetal spleen and thymus.

It is found in the endoplasmic reticulum membrane. Plays an essential role in the homeostatic regulation of sphingolipid de novo biosynthesis by modulating the activity of the serine palmitoyltransferase (SPT) in response to ceramide levels. When complexed to SPT, the binding of ceramides to its N-terminus stabilizes a conformation that block SPT substrate entry, hence preventing SPT catalytic activity. Through this mechanism, maintains ceramide levels at sufficient concentrations for the production of complex sphingolipids, but which prevents the accumulation of ceramides to levels that trigger apoptosis. The chain is ORM1-like protein 3 (ORMDL3) from Homo sapiens (Human).